A 694-amino-acid chain; its full sequence is Elongation factor G (694 aa).

In terms of domain architecture, tr-type G spans 8 to 283 (ERYRNIGIMA…AVIDYLPAPV (276 aa)). GTP is bound by residues 17-24 (AHIDAGKT), 81-85 (DTPGH), and 135-138 (NKMD).

The protein belongs to the TRAFAC class translation factor GTPase superfamily. Classic translation factor GTPase family. EF-G/EF-2 subfamily.

The protein resides in the cytoplasm. Its function is as follows. Catalyzes the GTP-dependent ribosomal translocation step during translation elongation. During this step, the ribosome changes from the pre-translocational (PRE) to the post-translocational (POST) state as the newly formed A-site-bound peptidyl-tRNA and P-site-bound deacylated tRNA move to the P and E sites, respectively. Catalyzes the coordinated movement of the two tRNA molecules, the mRNA and conformational changes in the ribosome. This Paramagnetospirillum magneticum (strain ATCC 700264 / AMB-1) (Magnetospirillum magneticum) protein is Elongation factor G.